The primary structure comprises 529 residues: Bifunctional purine biosynthesis protein PurH (529 aa).

The region spanning 8–158 is the MGS-like domain; that stretch reads PSAPDLVAPK…KNHGYVAVCT (151 aa).

The protein belongs to the PurH family.

It carries out the reaction (6R)-10-formyltetrahydrofolate + 5-amino-1-(5-phospho-beta-D-ribosyl)imidazole-4-carboxamide = 5-formamido-1-(5-phospho-D-ribosyl)imidazole-4-carboxamide + (6S)-5,6,7,8-tetrahydrofolate. The enzyme catalyses IMP + H2O = 5-formamido-1-(5-phospho-D-ribosyl)imidazole-4-carboxamide. The protein operates within purine metabolism; IMP biosynthesis via de novo pathway; 5-formamido-1-(5-phospho-D-ribosyl)imidazole-4-carboxamide from 5-amino-1-(5-phospho-D-ribosyl)imidazole-4-carboxamide (10-formyl THF route): step 1/1. Its pathway is purine metabolism; IMP biosynthesis via de novo pathway; IMP from 5-formamido-1-(5-phospho-D-ribosyl)imidazole-4-carboxamide: step 1/1. The sequence is that of Bifunctional purine biosynthesis protein PurH from Caulobacter vibrioides (strain ATCC 19089 / CIP 103742 / CB 15) (Caulobacter crescentus).